The following is a 223-amino-acid chain: UPF0441 protein YgiB (223 aa).

The span at 178–195 (TVPKTAMAPKPATTTTVT) shows a compositional bias: low complexity. The disordered stretch occupies residues 178–223 (TVPKTAMAPKPATTTTVTRGGFGESVAKQSTMQRSAAGTSTRSMGG). The segment covering 204–223 (AKQSTMQRSAAGTSTRSMGG) has biased composition (polar residues).

It belongs to the UPF0441 family.

The polypeptide is UPF0441 protein YgiB (Salmonella paratyphi B (strain ATCC BAA-1250 / SPB7)).